Here is a 149-residue protein sequence, read N- to C-terminus: Large ribosomal subunit protein eL19 (149 aa).

The interval 46–99 (EDGTIEAKTAKGNSRGRARKRQQKRAYGHKKGHGSRKGRSGGRQNEKEDWQSRI) is disordered. Residues 59–85 (SRGRARKRQQKRAYGHKKGHGSRKGRS) show a composition bias toward basic residues. A compositionally biased stretch (basic and acidic residues) spans 89–99 (QNEKEDWQSRI).

This sequence belongs to the eukaryotic ribosomal protein eL19 family. As to quaternary structure, part of the 50S ribosomal subunit.

In terms of biological role, binds to the 23S rRNA. This chain is Large ribosomal subunit protein eL19, found in Natronomonas pharaonis (strain ATCC 35678 / DSM 2160 / CIP 103997 / JCM 8858 / NBRC 14720 / NCIMB 2260 / Gabara) (Halobacterium pharaonis).